The chain runs to 459 residues: Vasoactive intestinal polypeptide receptor 1 (459 aa).

A signal peptide spans 1–30 (MRPPSPPHVRWLCVLAGALACALRPAGSQA). Residues 31-142 (ASPQHECEYL…EQQQTKFYNT (112 aa)) lie on the Extracellular side of the membrane. 5 disulfides stabilise this stretch: cysteine 37–cysteine 209, cysteine 50–cysteine 72, cysteine 63–cysteine 105, cysteine 86–cysteine 122, and cysteine 216–cysteine 286. Residues asparagine 58, asparagine 69, and asparagine 100 are each glycosylated (N-linked (GlcNAc...) asparagine). Residues 143–167 (VKTGYTIGYSLSLASLLVAMAILSL) form a helical membrane-spanning segment. The Cytoplasmic segment spans residues 168–175 (FRKLHCTR). Residues 176–197 (NYIHMHLFMSFILRATAVFIKD) form a helical membrane-spanning segment. Over 198–217 (MALFNSGEIDHCSEASVGCK) the chain is Extracellular. The chain crosses the membrane as a helical span at residues 218 to 242 (AAVVFFQYCVMANFFWLLVEGLYLY). Residues 243-255 (TLLAVSFFSERKY) are Cytoplasmic-facing. The chain crosses the membrane as a helical span at residues 256-277 (FWGYILIGWGVPSVFITIWTVV). The Extracellular segment spans residues 278 to 293 (RIYFEDFGCWDTIINS). Residue asparagine 292 is glycosylated (N-linked (GlcNAc...) asparagine). A helical transmembrane segment spans residues 294-318 (SLWWIIKAPILLSILVNFVLFICII). Topologically, residues 319–340 (RILVQKLRPPDIGKNDSSPYSR) are cytoplasmic. A helical transmembrane segment spans residues 341-361 (LAKSTLLLIPLFGIHYVMFAF). Residues 362-369 (FPDNFKAQ) are Extracellular-facing. The chain crosses the membrane as a helical span at residues 370–393 (VKMVFELVVGSFQGFVVAILYCFL). Over 394–459 (NGEVQAELRR…SSFQAEVSLV (66 aa)) the chain is Cytoplasmic.

It belongs to the G-protein coupled receptor 2 family. As to quaternary structure, interacts with ADCYAP1/PACAP; activated by both PACAP27 and PACAP38 neuropeptides. Interacts with VIP; the interaction results in VIPR1 activation. In liver, lung, intestines, thymus and brain (mostly in the cerebral cortex and hippocampus).

It is found in the cell membrane. In terms of biological role, g protein-coupled receptor activated by the neuropeptides vasoactive intestinal peptide (VIP) and pituitary adenylate cyclase-activating polypeptide (ADCYAP1/PACAP). Binds VIP and both PACAP27 and PACAP38 bioactive peptides with the following order of ligand affinity VIP = PACAP27 &gt; PACAP38. Ligand binding causes a conformation change that triggers signaling via guanine nucleotide-binding proteins (G proteins) and modulates the activity of downstream effectors. Activates cAMP-dependent pathway. The polypeptide is Vasoactive intestinal polypeptide receptor 1 (Rattus norvegicus (Rat)).